The chain runs to 215 residues: Adenylyl-sulfate kinase (215 aa).

46-53 (GLSGAGKS) contacts ATP. Catalysis depends on Ser120, which acts as the Phosphoserine intermediate.

This sequence belongs to the APS kinase family.

It catalyses the reaction adenosine 5'-phosphosulfate + ATP = 3'-phosphoadenylyl sulfate + ADP + H(+). It functions in the pathway sulfur metabolism; hydrogen sulfide biosynthesis; sulfite from sulfate: step 2/3. Its function is as follows. Catalyzes the synthesis of activated sulfate. This is Adenylyl-sulfate kinase (cysC) from Vibrio cholerae serotype O1 (strain ATCC 39315 / El Tor Inaba N16961).